The primary structure comprises 405 residues: Riboflavin biosynthesis protein RibBA (405 aa).

The segment at 1–205 (MEEIKLNTIE…IKDLIAYRLK (205 aa)) is DHBP synthase. D-ribulose 5-phosphate contacts are provided by residues 30–31 (RE), Asp-35, 144–148 (RAGHT), and Glu-168. Glu-31 lines the Mg(2+) pocket. His-147 lines the Mg(2+) pocket. The interval 206–405 (QESIVEKGVE…RMGHELHNIK (200 aa)) is GTP cyclohydrolase II. 256-260 (RMHSS) serves as a coordination point for GTP. Residues Cys-261, Cys-272, and Cys-274 each contribute to the Zn(2+) site. GTP contacts are provided by residues Gln-277, 299 to 301 (EGR), and Thr-321. Asp-333 acts as the Proton acceptor; for GTP cyclohydrolase activity in catalysis. Arg-335 acts as the Nucleophile; for GTP cyclohydrolase activity in catalysis. 2 residues coordinate GTP: Thr-356 and Lys-361.

In the N-terminal section; belongs to the DHBP synthase family. This sequence in the C-terminal section; belongs to the GTP cyclohydrolase II family. Mg(2+) serves as cofactor. The cofactor is Mn(2+). Zn(2+) is required as a cofactor.

It carries out the reaction D-ribulose 5-phosphate = (2S)-2-hydroxy-3-oxobutyl phosphate + formate + H(+). The catalysed reaction is GTP + 4 H2O = 2,5-diamino-6-hydroxy-4-(5-phosphoribosylamino)-pyrimidine + formate + 2 phosphate + 3 H(+). Its pathway is cofactor biosynthesis; riboflavin biosynthesis; 2-hydroxy-3-oxobutyl phosphate from D-ribulose 5-phosphate: step 1/1. The protein operates within cofactor biosynthesis; riboflavin biosynthesis; 5-amino-6-(D-ribitylamino)uracil from GTP: step 1/4. Functionally, catalyzes the conversion of D-ribulose 5-phosphate to formate and 3,4-dihydroxy-2-butanone 4-phosphate. In terms of biological role, catalyzes the conversion of GTP to 2,5-diamino-6-ribosylamino-4(3H)-pyrimidinone 5'-phosphate (DARP), formate and pyrophosphate. The polypeptide is Riboflavin biosynthesis protein RibBA (Porphyromonas gingivalis (strain ATCC 33277 / DSM 20709 / CIP 103683 / JCM 12257 / NCTC 11834 / 2561)).